Here is a 128-residue protein sequence, read N- to C-terminus: Glycine cleavage system H protein (128 aa).

One can recognise a Lipoyl-binding domain in the interval 24–105 (SLTIGVTDHA…AYAAWLFKLK (82 aa)). Lysine 65 bears the N6-lipoyllysine mark.

This sequence belongs to the GcvH family. In terms of assembly, the glycine cleavage system is composed of four proteins: P, T, L and H. The cofactor is (R)-lipoate.

The glycine cleavage system catalyzes the degradation of glycine. The H protein shuttles the methylamine group of glycine from the P protein to the T protein. The chain is Glycine cleavage system H protein from Aromatoleum aromaticum (strain DSM 19018 / LMG 30748 / EbN1) (Azoarcus sp. (strain EbN1)).